The sequence spans 155 residues: uncharacterized protein (155 aa).

The N-terminal stretch at 1-23 (MKIRSLSRFVLASTMFASFTASA) is a signal peptide.

This sequence to E.coli YkfB.

This is an uncharacterized protein from Escherichia coli (strain K12).